The primary structure comprises 580 residues: Fumarate hydratase class I, aerobic (580 aa).

Positions 105, 224, and 318 each coordinate [4Fe-4S] cluster.

This sequence belongs to the class-I fumarase family. Homodimer. Requires [4Fe-4S] cluster as cofactor.

It catalyses the reaction (S)-malate = fumarate + H2O. The catalysed reaction is oxaloacetate = enol-oxaloacetate. It participates in carbohydrate metabolism; tricarboxylic acid cycle; (S)-malate from fumarate: step 1/1. Functionally, catalyzes the reversible hydration of fumarate to (S)-malate. Functions as an aerobic enzyme in the direction of malate formation as part of the citric acid cycle. Accounts for about 80% of the fumarase activity when the bacteria grow aerobically. To a lesser extent, also displays D-tartrate dehydratase activity in vitro, but is not able to convert (R)-malate, L-tartrate or meso-tartrate. Can also catalyze the isomerization of enol- to keto-oxaloacetate. This Salmonella typhimurium (strain LT2 / SGSC1412 / ATCC 700720) protein is Fumarate hydratase class I, aerobic.